A 255-amino-acid polypeptide reads, in one-letter code: Ribonuclease HII (255 aa).

One can recognise an RNase H type-2 domain in the interval 70 to 255 (ELIAGVDEVG…FEPIKSIIKK (186 aa)). A divalent metal cation is bound by residues Asp-76, Glu-77, and Asp-168.

This sequence belongs to the RNase HII family. Mn(2+) serves as cofactor. Mg(2+) is required as a cofactor.

The protein localises to the cytoplasm. It catalyses the reaction Endonucleolytic cleavage to 5'-phosphomonoester.. Endonuclease that specifically degrades the RNA of RNA-DNA hybrids. The polypeptide is Ribonuclease HII (Streptococcus thermophilus (strain ATCC BAA-491 / LMD-9)).